The primary structure comprises 538 residues: Chaperonin GroEL (538 aa).

Residues 29–32 (TLGP), 86–90 (DGTTT), glycine 413, 479–481 (DAL), and aspartate 495 each bind ATP.

This sequence belongs to the chaperonin (HSP60) family. As to quaternary structure, forms a cylinder of 14 subunits composed of two heptameric rings stacked back-to-back. Interacts with the co-chaperonin GroES.

It localises to the cytoplasm. The catalysed reaction is ATP + H2O + a folded polypeptide = ADP + phosphate + an unfolded polypeptide.. Together with its co-chaperonin GroES, plays an essential role in assisting protein folding. The GroEL-GroES system forms a nano-cage that allows encapsulation of the non-native substrate proteins and provides a physical environment optimized to promote and accelerate protein folding. The sequence is that of Chaperonin GroEL from Fervidobacterium nodosum (strain ATCC 35602 / DSM 5306 / Rt17-B1).